The chain runs to 123 residues: Small ribosomal subunit protein uS13 (123 aa).

Positions 95–123 (GLPVRGQKTKTNARTRKGPKRTVGRKKKK) are disordered. The segment covering 101-123 (QKTKTNARTRKGPKRTVGRKKKK) has biased composition (basic residues).

It belongs to the universal ribosomal protein uS13 family. As to quaternary structure, part of the 30S ribosomal subunit. Forms a loose heterodimer with protein S19. Forms two bridges to the 50S subunit in the 70S ribosome.

Its function is as follows. Located at the top of the head of the 30S subunit, it contacts several helices of the 16S rRNA. In the 70S ribosome it contacts the 23S rRNA (bridge B1a) and protein L5 of the 50S subunit (bridge B1b), connecting the 2 subunits; these bridges are implicated in subunit movement. Contacts the tRNAs in the A and P-sites. This chain is Small ribosomal subunit protein uS13, found in Alkaliphilus metalliredigens (strain QYMF).